We begin with the raw amino-acid sequence, 135 residues long: Large ribosomal subunit protein uL16c (135 aa).

This sequence belongs to the universal ribosomal protein uL16 family. Part of the 50S ribosomal subunit.

The protein localises to the plastid. It localises to the chloroplast. This Acorus calamus var. americanus (American sweet flag) protein is Large ribosomal subunit protein uL16c.